Consider the following 345-residue polypeptide: Methylthioribose-1-phosphate isomerase (345 aa).

Substrate is bound by residues 44–46 (RGA), Arg86, and Gln194. Asp235 serves as the catalytic Proton donor. 245-246 (NK) provides a ligand contact to substrate.

It belongs to the eIF-2B alpha/beta/delta subunits family. MtnA subfamily.

The enzyme catalyses 5-(methylsulfanyl)-alpha-D-ribose 1-phosphate = 5-(methylsulfanyl)-D-ribulose 1-phosphate. The protein operates within amino-acid biosynthesis; L-methionine biosynthesis via salvage pathway; L-methionine from S-methyl-5-thio-alpha-D-ribose 1-phosphate: step 1/6. Functionally, catalyzes the interconversion of methylthioribose-1-phosphate (MTR-1-P) into methylthioribulose-1-phosphate (MTRu-1-P). The sequence is that of Methylthioribose-1-phosphate isomerase from Desulfitobacterium hafniense (strain Y51).